The sequence spans 140 residues: MSTIRCDIVSAEKEIFHGEATLVVATGELGELGIAPKHAPLITRLKPGKVVVITANGEHLDFAISGGILEVQPQVVTILVDTAVRAQDIEEAAVRKVKEEAERLLANRGNTVDVAEAQRRLTEATVQLQALERLRRNLKH.

Belongs to the ATPase epsilon chain family. In terms of assembly, F-type ATPases have 2 components, CF(1) - the catalytic core - and CF(0) - the membrane proton channel. CF(1) has five subunits: alpha(3), beta(3), gamma(1), delta(1), epsilon(1). CF(0) has three main subunits: a, b and c.

It is found in the cell inner membrane. Produces ATP from ADP in the presence of a proton gradient across the membrane. The sequence is that of ATP synthase epsilon chain from Xanthomonas oryzae pv. oryzae (strain PXO99A).